The primary structure comprises 98 residues: Prostate and testis expressed protein 3 (98 aa).

The signal sequence occupies residues 1 to 20; the sequence is MNKHFLFLFLLYCLIVAVTS. Residues 21-97 enclose the UPAR/Ly6 domain; the sequence is LQCITCHLRT…CCNYNYCNFK (77 aa). Disulfide bonds link Cys-23–Cys-50, Cys-26–Cys-35, Cys-42–Cys-68, and Cys-72–Cys-88.

It belongs to the PATE family. In terms of tissue distribution, specifically expressed in prostate and testis.

Its subcellular location is the secreted. The polypeptide is Prostate and testis expressed protein 3 (PATE3) (Homo sapiens (Human)).